The following is a 296-amino-acid chain: Probable porphobilinogen deaminase (296 aa).

Cys-241 carries the S-(dipyrrolylmethanemethyl)cysteine modification.

Belongs to the HMBS family. It depends on dipyrromethane as a cofactor.

The catalysed reaction is 4 porphobilinogen + H2O = hydroxymethylbilane + 4 NH4(+). Its pathway is porphyrin-containing compound metabolism; protoporphyrin-IX biosynthesis; coproporphyrinogen-III from 5-aminolevulinate: step 2/4. Functionally, tetrapolymerization of the monopyrrole PBG into the hydroxymethylbilane pre-uroporphyrinogen in several discrete steps. This is Probable porphobilinogen deaminase from Pyrobaculum calidifontis (strain DSM 21063 / JCM 11548 / VA1).